The following is a 243-amino-acid chain: Ubiquinone/menaquinone biosynthesis C-methyltransferase UbiE (243 aa).

S-adenosyl-L-methionine-binding positions include Thr-69, Asp-90, and 116 to 117; that span reads DA.

Belongs to the class I-like SAM-binding methyltransferase superfamily. MenG/UbiE family.

It carries out the reaction a 2-demethylmenaquinol + S-adenosyl-L-methionine = a menaquinol + S-adenosyl-L-homocysteine + H(+). The catalysed reaction is a 2-methoxy-6-(all-trans-polyprenyl)benzene-1,4-diol + S-adenosyl-L-methionine = a 5-methoxy-2-methyl-3-(all-trans-polyprenyl)benzene-1,4-diol + S-adenosyl-L-homocysteine + H(+). The protein operates within quinol/quinone metabolism; menaquinone biosynthesis; menaquinol from 1,4-dihydroxy-2-naphthoate: step 2/2. It participates in cofactor biosynthesis; ubiquinone biosynthesis. Its function is as follows. Methyltransferase required for the conversion of demethylmenaquinol (DMKH2) to menaquinol (MKH2) and the conversion of 2-polyprenyl-6-methoxy-1,4-benzoquinol (DDMQH2) to 2-polyprenyl-3-methyl-6-methoxy-1,4-benzoquinol (DMQH2). This chain is Ubiquinone/menaquinone biosynthesis C-methyltransferase UbiE, found in Burkholderia vietnamiensis (strain G4 / LMG 22486) (Burkholderia cepacia (strain R1808)).